The sequence spans 259 residues: Phosphate import ATP-binding protein PstB (259 aa).

Positions glycine 2–glutamate 248 constitute an ABC transporter domain. An ATP-binding site is contributed by glycine 37–serine 44.

Belongs to the ABC transporter superfamily. Phosphate importer (TC 3.A.1.7) family. In terms of assembly, the complex is composed of two ATP-binding proteins (PstB), two transmembrane proteins (PstC and PstA) and a solute-binding protein (PstS).

The protein resides in the cell membrane. It carries out the reaction phosphate(out) + ATP + H2O = ADP + 2 phosphate(in) + H(+). Functionally, part of the ABC transporter complex PstSACB involved in phosphate import. Responsible for energy coupling to the transport system. In Bifidobacterium longum (strain NCC 2705), this protein is Phosphate import ATP-binding protein PstB.